A 377-amino-acid chain; its full sequence is Nucleosome assembly protein 1;3 (377 aa).

The stretch at 26–80 forms a coiled coil; it reads VNVLKNKLQGLTGKHSNVLENLSPNVRKRVEVLREIQTQHDELEAKFFEERAALE. The Nuclear export signal signature appears at 47–62; sequence LSPNVRKRVEVLREIQ. Residues 223 to 228 carry the Nuclear localization signal motif; it reads KKKPKK. The interval 298-377 is disordered; it reads EAAQDEDYID…GERPPECKQQ (80 aa). The span at 300–341 shows a compositional bias: acidic residues; it reads AQDEDYIDLEDDEDEEDDEDEDEDEEDEEEEDEDEDDDDEDE. Residues 345–357 are compositionally biased toward basic residues; it reads KTKKKSSAGRKRS. Cysteine methyl ester is present on Cys374. Cys374 carries the S-farnesyl cysteine lipid modification. Residues 375–377 constitute a propeptide, removed in mature form; sequence KQQ.

It belongs to the nucleosome assembly protein (NAP) family. Can form homomeric and heteromeric protein complexes with NAP1;4. Binds histones H2A and H2B in vivo. Also able to bind histones H1 and H4 in vitro. Interacts with CYCB1;1 and with alpha tubulin.

It is found in the nucleus. The protein resides in the cytoplasm. Its function is as follows. May modulate chromatin structure by regulation of nucleosome assembly/disassembly. Could function together with B-type cyclins in the regulation of microtubule dynamics. The polypeptide is Nucleosome assembly protein 1;3 (NAP1;3) (Nicotiana tabacum (Common tobacco)).